The following is a 1561-amino-acid chain: MLSWRLQTGSEKAELQELNARLYDYVCRVRELERENLLLEEELRSRLSREDRWAEDQALYAEEARSLRQQLDELNWSTALAEGERDALRRELLELQREGVEAGTARSRLDAELGAQRRELEEALGARAALEALLGRLETERRDLDAAHERQVRDLRARAASLTMHFRARATSPAAPPPRLRDVHDSYALLVAESWRESVQLYEDEVRELEQALRRGQESRLQAEDEARLCAQEADALRNQALELEQLRARLEDELLRMREEYGMQAEERQRVIDSLEDEKEALTLAMADRLRDYQELLQVKTGLSLEVATYRALLEGESNPEILIWTENIENVPQEPRNTSYRYTNSVLQRKNEKNLFPRRKTPWAAVNHSSASYSNWPGHLDSQTTTAVGSAARRGLLTSRHSSSATTSGQQKPLEKTISSRANLRPVTPTHGFLRNTDAQMKTLPHRSKVEGTGDTHARRATESVITRESYRGHQGHVAAGAVSSTPSNERTVILGKKLEAQATKEQERDRSGVIRIKPEEKMFDSKEKASEERNLRWEELTKLDRDARKRESRHLRDEAREKEALKERSVKEREVPISLEVSRGSRAEVSTIHLQSPGRKDVSHSGGREAETKETRFRLDTQDTASSLQSDSTTETIAESIVTTILKQFTQSPGAEEEATSFPDTKVTYVDRKEFPGDGKTKTEIVVESKLTDVVDVSDEAGLDYLLSKDVKEVGLKGKSTETMIGEMINLGLKGREGRAKVVNVEIVEEPMSYIGGGKIDFSTPFQVEEVDDVSPSPKGFVEEEDGEGETHMAFSMRPHQTKQPQGTIPHVEEVTEAGDSEGEQSYFVSTPDEYPGGHDREDDGSVYGQIHIEEESTIRYSWQDEIAQGTWRRKMRGDVGGEKPVKVLEVPALSLGGAIGSAHLKEEASGELRAEPTVIEKEIKIPHEFHTSIKGVFSSEPRHQLVEVIGQLEETLPERMKEELSALTRQSQGESGSVSVDVKKVQSAAGGSVTLMAEVNLSQTVDADQLDLEQLSRDEAGEIERAVESVVRESLAKRSSPVPRSPDREDGEEVPAGGILFKRWATRELYSPSGERDDAGQVSPSSDQRVTQGPVSATVEVTSPTGFVQSHVLEDVSQSVRHVKLGPTEMWRTEQVTFGGPTAQVVEVSGDFSEAVSSEGASRSVRHITLGPHQSQVSTEVIFRGSVPTWQETGDTEKPGPVVLSVGADISGSGRMPGSERSHTEKEIRFQGPVSGTAQVGGNFATEESVGSQTFVRSLQLGPKEGFREEIQFIAPIPDKVGWGEEDSEHTKVSLERATSIQRIDIVPQRYLASKQMAPQTLEFRDSEDMVMVEGSAGTIQATHNFTSDREILQNKENTFQRVISGSPPDSVGDTGAEVTANVSRSFRHIQIGPTEEEPSEYFVTGRPVSKTFVLDGSVASPGLVGGADGGSTPCRIALGPKETSFTFQMDLSDTRAIRSWTRDTGSEVEAHGVSHRGGWRIAHSRDERVASTGSGASPGDAHQAPGEKGTEQAGFDKTVQLQRMVDQRSVASDEKKVALLYLDNEEEEEEEGEGWF.

Positions 1-10 (MLSWRLQTGS) are head. The segment at 11–49 (EKAELQELNARLYDYVCRVRELERENLLLEEELRSRLSR) is coil 1A. The segment at 11-320 (EKAELQELNA…YRALLEGESN (310 aa)) is interaction with DMD and UTRN. The IF rod domain maps to 11–322 (EKAELQELNA…ALLEGESNPE (312 aa)). The segment at 50 to 58 (EDRWAEDQA) is linker 1. A coil 1B region spans residues 59 to 163 (LYAEEARSLR…DLRARAASLT (105 aa)). A linker 12 region spans residues 164 to 186 (MHFRARATSPAAPPPRLRDVHDS). The segment at 187 to 300 (YALLVAESWR…LRDYQELLQV (114 aa)) is coil 2. The tail stretch occupies residues 301 to 1561 (KTGLSLEVAT…EEEEEGEGWF (1261 aa)). Polar residues-rich tracts occupy residues 371–390 (SSASYSNWPGHLDSQTTTAV) and 401–421 (SRHSSSATTSGQQKPLEKTIS). Disordered stretches follow at residues 371-421 (SSAS…KTIS), 549-574 (DARKRESRHLRDEAREKEALKERSVK), and 591-637 (EVST…DSTT). The segment covering 601 to 624 (GRKDVSHSGGREAETKETRFRLDT) has biased composition (basic and acidic residues). Residues 625-637 (QDTASSLQSDSTT) show a composition bias toward polar residues. Residue Thr653 is modified to Phosphothreonine. Phosphoserine occurs at positions 655, 778, 780, 1044, 1049, 1077, 1087, 1179, and 1182. 2 disordered regions span residues 1033–1061 (SVVRESLAKRSSPVPRSPDREDGEEVPAG) and 1075–1099 (SPSGERDDAGQVSPSSDQRVTQGPV). Residues 1086-1099 (VSPSSDQRVTQGPV) show a composition bias toward polar residues. Positions 1152-1453 (VSGDFSEAVS…GPKETSFTFQ (302 aa)) are interaction with TLN1 and VCL. Residues 1212 to 1231 (ADISGSGRMPGSERSHTEKE) are disordered. The segment covering 1222–1231 (GSERSHTEKE) has biased composition (basic and acidic residues). The tract at residues 1242–1557 (AQVGGNFATE…DNEEEEEEEG (316 aa)) is interaction with DMD and UTRN. Residue Ser1425 is modified to Phosphoserine. Position 1481 is an omega-N-methylarginine (Arg1481). The interval 1491–1519 (DERVASTGSGASPGDAHQAPGEKGTEQAG) is disordered.

Belongs to the intermediate filament family. As to quaternary structure, interacts with DES, DMD, DTNA, TLN1, UTRN and VCL. Isoform 1 and isoform 2 interact with GFAP and VIM. Isoform 2 and isoform 3 are detected in adult skeletal muscle, heart and bladder, whereas isoform 1 is only detected in adult bladder (at protein level).

The protein localises to the cytoplasm. It localises to the cytoskeleton. Its subcellular location is the cell junction. It is found in the adherens junction. In terms of biological role, type-VI intermediate filament (IF) which plays an important cytoskeletal role within the muscle cell cytoskeleton. It forms heteromeric IFs with desmin and/or vimentin, and via its interaction with cytoskeletal proteins alpha-dystrobrevin, dystrophin, talin-1, utrophin and vinculin, is able to link these heteromeric IFs to adherens-type junctions, such as to the costameres, neuromuscular junctions, and myotendinous junctions within striated muscle cells. This is Synemin from Mus musculus (Mouse).